The following is a 275-amino-acid chain: 3-methyl-2-oxobutanoate hydroxymethyltransferase (275 aa).

2 residues coordinate Mg(2+): aspartate 44 and aspartate 83. 3-methyl-2-oxobutanoate is bound by residues 44-45, aspartate 83, and lysine 113; that span reads DS. Position 115 (glutamate 115) interacts with Mg(2+). Glutamate 182 (proton acceptor) is an active-site residue.

It belongs to the PanB family. Homodecamer; pentamer of dimers. Requires Mg(2+) as cofactor.

The protein resides in the cytoplasm. It carries out the reaction 3-methyl-2-oxobutanoate + (6R)-5,10-methylene-5,6,7,8-tetrahydrofolate + H2O = 2-dehydropantoate + (6S)-5,6,7,8-tetrahydrofolate. It participates in cofactor biosynthesis; (R)-pantothenate biosynthesis; (R)-pantoate from 3-methyl-2-oxobutanoate: step 1/2. Catalyzes the reversible reaction in which hydroxymethyl group from 5,10-methylenetetrahydrofolate is transferred onto alpha-ketoisovalerate to form ketopantoate. This chain is 3-methyl-2-oxobutanoate hydroxymethyltransferase, found in Enterococcus faecalis (strain ATCC 700802 / V583).